The primary structure comprises 246 residues: UPF0309 protein TTE0306 (246 aa).

Positions 31–212 constitute an SIS domain; the sequence is ITESLISEDS…EAEIITNMLE (182 aa).

Belongs to the UPF0309 family.

In Caldanaerobacter subterraneus subsp. tengcongensis (strain DSM 15242 / JCM 11007 / NBRC 100824 / MB4) (Thermoanaerobacter tengcongensis), this protein is UPF0309 protein TTE0306.